Reading from the N-terminus, the 765-residue chain is Probable dipeptidyl peptidase 4 (765 aa).

The signal sequence occupies residues 1–14 (MKWSILLLVGCAAA). N-linked (GlcNAc...) asparagine glycosylation is found at Asn35, Asn78, Asn101, Asn110, Asn169, Asn218, Asn465, and Asn490. Catalysis depends on Ser613, which acts as the Charge relay system. A glycan (N-linked (GlcNAc...) asparagine) is linked at Asn665. Catalysis depends on charge relay system residues Asp690 and His725.

It belongs to the peptidase S9B family.

It is found in the secreted. The catalysed reaction is Release of an N-terminal dipeptide, Xaa-Yaa-|-Zaa-, from a polypeptide, preferentially when Yaa is Pro, provided Zaa is neither Pro nor hydroxyproline.. Functionally, extracellular dipeptidyl-peptidase which removes N-terminal dipeptides sequentially from polypeptides having unsubstituted N-termini provided that the penultimate residue is proline. In Neosartorya fischeri (strain ATCC 1020 / DSM 3700 / CBS 544.65 / FGSC A1164 / JCM 1740 / NRRL 181 / WB 181) (Aspergillus fischerianus), this protein is Probable dipeptidyl peptidase 4 (dpp4).